Consider the following 495-residue polypeptide: Putative aldehyde dehydrogenase AldA (495 aa).

212 to 218 is a binding site for NAD(+); sequence GKGSESG. Active-site residues include Glu256 and Cys290.

The protein belongs to the aldehyde dehydrogenase family.

It carries out the reaction an aldehyde + NAD(+) + H2O = a carboxylate + NADH + 2 H(+). This is Putative aldehyde dehydrogenase AldA (aldA) from Staphylococcus aureus (strain bovine RF122 / ET3-1).